The chain runs to 315 residues: Alpha- and gamma-adaptin-binding protein p34 (315 aa).

Residues 197 to 234 are disordered; that stretch reads IGSADPCHPEQPHLPAADSTESLSDHRGGASNTTDAQV. A phosphoserine mark is found at S310 and S311.

In terms of assembly, associated with AP-1 and AP-2 complexes. Widely expressed, including in skin and keratinocytes, with highest levels in adrenal gland, rectum and thymus.

It localises to the cytoplasm. The protein localises to the cytosol. May be involved in endocytic recycling of growth factor receptors such as EGFR. The polypeptide is Alpha- and gamma-adaptin-binding protein p34 (AAGAB) (Homo sapiens (Human)).